The following is a 578-amino-acid chain: 15-cis-phytoene desaturase, chloroplastic/chromoplastic (578 aa).

The transit peptide at 1–87 (MDTGCLSSMN…PLENTINFLE (87 aa)) directs the protein to the chloroplast and chromoplast. FAD-binding positions include Ala115, 134-135 (EA), Lys142, 159-160 (HI), and Tyr165. Arg300 is a binding site for substrate. FAD contacts are provided by Ile342 and Asp531. Ala539 is a substrate binding site. Met541 is a binding site for FAD.

It belongs to the carotenoid/retinoid oxidoreductase family. Homotetramer. Homotetramer is the active form of the enzyme. The cofactor is FAD.

The protein localises to the plastid. Its subcellular location is the chloroplast. It localises to the chromoplast. It is found in the membrane. The catalysed reaction is 2 a plastoquinone + 15-cis-phytoene = 9,9',15-tri-cis-zeta-carotene + 2 a plastoquinol. It functions in the pathway carotenoid biosynthesis; lycopene biosynthesis. With respect to regulation, inhibited by the herbicide norflurazon (NFZ). In terms of biological role, converts phytoene into zeta-carotene via the intermediary of phytofluene by the symmetrical introduction of two double bonds at the C-11 and C-11' positions of phytoene with a concomitant isomerization of two neighboring double bonds at the C9 and C9' positions from trans to cis. Active with decylplastoquinone (DPQ) as substrate. Also active with other benzoquinones, which are strongly preferred over naphthoquinones as substrates. This Oryza sativa subsp. indica (Rice) protein is 15-cis-phytoene desaturase, chloroplastic/chromoplastic (PDS1).